Consider the following 315-residue polypeptide: Probable diguanylate cyclase DgcF (315 aa).

4 helical membrane passes run 10-30 (FSTG…GVLP), 41-61 (IALI…SLAF), 80-100 (LLTF…VIDI), and 116-136 (LGIA…AAIN). A GGDEF domain is found at 173–310 (QHLTVMLLDI…GRNRTSTMRY (138 aa)). Residues D181 and I182 each coordinate Mg(2+). Positions 189, 194, and 198 each coordinate substrate. Residue E224 participates in Mg(2+) binding.

As to quaternary structure, homodimer. Requires Mg(2+) as cofactor.

It is found in the cell membrane. It carries out the reaction 2 GTP = 3',3'-c-di-GMP + 2 diphosphate. It functions in the pathway purine metabolism; 3',5'-cyclic di-GMP biosynthesis. In terms of biological role, catalyzes the synthesis of cyclic-di-GMP (c-di-GMP) via the condensation of 2 GTP molecules. In Escherichia coli (strain K12), this protein is Probable diguanylate cyclase DgcF.